We begin with the raw amino-acid sequence, 179 residues long: Large ribosomal subunit protein uL5 (179 aa).

It belongs to the universal ribosomal protein uL5 family. As to quaternary structure, part of the 50S ribosomal subunit; part of the 5S rRNA/L5/L18/L25 subcomplex. Contacts the 5S rRNA and the P site tRNA. Forms a bridge to the 30S subunit in the 70S ribosome.

Functionally, this is one of the proteins that bind and probably mediate the attachment of the 5S RNA into the large ribosomal subunit, where it forms part of the central protuberance. In the 70S ribosome it contacts protein S13 of the 30S subunit (bridge B1b), connecting the 2 subunits; this bridge is implicated in subunit movement. Contacts the P site tRNA; the 5S rRNA and some of its associated proteins might help stabilize positioning of ribosome-bound tRNAs. The sequence is that of Large ribosomal subunit protein uL5 from Aromatoleum aromaticum (strain DSM 19018 / LMG 30748 / EbN1) (Azoarcus sp. (strain EbN1)).